Consider the following 466-residue polypeptide: UDP-N-acetylmuramate--L-alanine ligase (466 aa).

ATP is bound at residue 119–125 (GTHGKTT).

The protein belongs to the MurCDEF family.

It localises to the cytoplasm. It carries out the reaction UDP-N-acetyl-alpha-D-muramate + L-alanine + ATP = UDP-N-acetyl-alpha-D-muramoyl-L-alanine + ADP + phosphate + H(+). It functions in the pathway cell wall biogenesis; peptidoglycan biosynthesis. Its function is as follows. Cell wall formation. The polypeptide is UDP-N-acetylmuramate--L-alanine ligase (Cytophaga hutchinsonii (strain ATCC 33406 / DSM 1761 / CIP 103989 / NBRC 15051 / NCIMB 9469 / D465)).